Reading from the N-terminus, the 473-residue chain is ATP synthase subunit beta (473 aa).

Position 158–165 (glycine 158–threonine 165) interacts with ATP.

It belongs to the ATPase alpha/beta chains family. As to quaternary structure, F-type ATPases have 2 components, CF(1) - the catalytic core - and CF(0) - the membrane proton channel. CF(1) has five subunits: alpha(3), beta(3), gamma(1), delta(1), epsilon(1). CF(0) has three main subunits: a(1), b(2) and c(9-12). The alpha and beta chains form an alternating ring which encloses part of the gamma chain. CF(1) is attached to CF(0) by a central stalk formed by the gamma and epsilon chains, while a peripheral stalk is formed by the delta and b chains.

The protein resides in the cell membrane. It carries out the reaction ATP + H2O + 4 H(+)(in) = ADP + phosphate + 5 H(+)(out). Produces ATP from ADP in the presence of a proton gradient across the membrane. The catalytic sites are hosted primarily by the beta subunits. The polypeptide is ATP synthase subunit beta (Geobacillus thermodenitrificans (strain NG80-2)).